Consider the following 184-residue polypeptide: Endothelial cell-specific molecule 1 (184 aa).

The first 19 residues, 1–19 (MKSVLLLTTLLVPAHLVAA), serve as a signal peptide directing secretion. The IGFBP N-terminal domain occupies 24 to 102 (YAVDCPQHCD…GEEFGICKDC (79 aa)). Disulfide bonds link C28-C51, C32-C53, C37-C54, C43-C57, C65-C83, and C77-C99. The O-linked (Xyl...) (chondroitin sulfate) serine glycan is linked to S156.

Monomer. In terms of processing, may contain intrachain disulfide bonds. O-glycosylated; contains chondroitin sulfate and dermatan sulfate. In terms of tissue distribution, expressed in lung, on the vascular capillary network within alveolar walls, and also at lower level in kidney.

It localises to the secreted. Functionally, involved in angiogenesis; promotes angiogenic sprouting. May have potent implications in lung endothelial cell-leukocyte interactions. This Homo sapiens (Human) protein is Endothelial cell-specific molecule 1 (ESM1).